The sequence spans 350 residues: Adenine DNA glycosylase (350 aa).

The active-site Proton donor/acceptor is the glutamate 37. 4 residues coordinate [4Fe-4S] cluster: cysteine 192, cysteine 199, cysteine 202, and cysteine 208.

The protein belongs to the Nth/MutY family. In terms of assembly, monomer. It depends on [4Fe-4S] cluster as a cofactor.

The catalysed reaction is Hydrolyzes free adenine bases from 7,8-dihydro-8-oxoguanine:adenine mismatched double-stranded DNA, leaving an apurinic site.. Its function is as follows. Adenine glycosylase active on G-A mispairs. MutY also corrects error-prone DNA synthesis past GO lesions which are due to the oxidatively damaged form of guanine: 7,8-dihydro-8-oxoguanine (8-oxo-dGTP). In Escherichia coli (strain K12), this protein is Adenine DNA glycosylase (mutY).